Reading from the N-terminus, the 98-residue chain is NADH-ubiquinone oxidoreductase chain 4L (98 aa).

A run of 3 helical transmembrane segments spans residues 2–22, 29–49, and 61–81; these read PPIFANIILAFATAFLGTLIF, SLLCLEGMMLSMFILSTLIIL, and ILLLVFAACEAAIGLALLVMV.

This sequence belongs to the complex I subunit 4L family. Core subunit of respiratory chain NADH dehydrogenase (Complex I) which is composed of 45 different subunits.

It is found in the mitochondrion inner membrane. It carries out the reaction a ubiquinone + NADH + 5 H(+)(in) = a ubiquinol + NAD(+) + 4 H(+)(out). Core subunit of the mitochondrial membrane respiratory chain NADH dehydrogenase (Complex I) which catalyzes electron transfer from NADH through the respiratory chain, using ubiquinone as an electron acceptor. Part of the enzyme membrane arm which is embedded in the lipid bilayer and involved in proton translocation. This is NADH-ubiquinone oxidoreductase chain 4L (MT-ND4L) from Avahi unicolor (Sambirano woolly lemur).